A 343-amino-acid polypeptide reads, in one-letter code: Flavonoid 3'-O-methyltransferase FOMT (343 aa).

S-adenosyl-L-homocysteine is bound by residues Gly-184, Asp-207, Asp-227, Met-228, Met-240, and Lys-241. His-245 acts as the Proton acceptor in catalysis. Catalysis depends on residues Glu-273 and Glu-305.

Belongs to the class I-like SAM-binding methyltransferase superfamily. Cation-independent O-methyltransferase family. As to quaternary structure, homodimer.

The enzyme catalyses 3',5-dihydroxy-3,4',7-trimethoxyflavone + S-adenosyl-L-methionine = 5-hydroxy-3,7,3',4'-tetramethoxyflavone + S-adenosyl-L-homocysteine + H(+). The protein operates within flavonoid metabolism. Inhibited by nickel (NiCl(2) and NiSO(4)) and para-chloromercuribenzoate. Its function is as follows. Catalyzes the 3'- or 5'-O-methylation of partially methylated flavonols, but does not accept quercetin or caffeate as substrates for methylation. In Chrysosplenium americanum (American golden saxifrage), this protein is Flavonoid 3'-O-methyltransferase FOMT.